A 365-amino-acid polypeptide reads, in one-letter code: Centrosomal protein of 41 kDa B (365 aa).

The segment covering 1–14 has biased composition (basic and acidic residues); that stretch reads MSAKRSIGDPEILK. Disordered stretches follow at residues 1–23 and 104–123; these read MSAKRSIGDPEILKKRIPQNQKY and EFLTDRPNGKGSPVSESKSP. Positions 177–274 constitute a Rhodanese domain; sequence EDCPFLLLDV…ISQKFPQGLT (98 aa). Residues 329-365 are disordered; sequence TSTPSRLRLDSRNSKVPSSASSARSLSSTSSHSKPWK. Residues 342 to 365 show a composition bias toward low complexity; that stretch reads SKVPSSASSARSLSSTSSHSKPWK.

The protein belongs to the CEP41 family.

The protein localises to the cytoplasm. It is found in the cytoskeleton. It localises to the microtubule organizing center. Its subcellular location is the centrosome. The protein resides in the cell projection. The protein localises to the cilium. It is found in the cilium basal body. Required during ciliogenesis for tubulin glutamylation in cilium. Probably acts by participating in the transport of tubulin polyglutamylases between the basal body and the cilium. This Xenopus laevis (African clawed frog) protein is Centrosomal protein of 41 kDa B (cep41-b).